Reading from the N-terminus, the 390-residue chain is 1-deoxy-D-xylulose 5-phosphate reductoisomerase (390 aa).

7 residues coordinate NADPH: T10, G11, S12, V13, G38, N40, and N123. Position 124 (K124) interacts with 1-deoxy-D-xylulose 5-phosphate. Position 125 (E125) interacts with NADPH. D149 serves as a coordination point for Mn(2+). The 1-deoxy-D-xylulose 5-phosphate site is built by S150, E151, S175, and H198. Position 151 (E151) interacts with Mn(2+). An NADPH-binding site is contributed by G204. Positions 211, 216, 217, and 220 each coordinate 1-deoxy-D-xylulose 5-phosphate. E220 provides a ligand contact to Mn(2+).

The protein belongs to the DXR family. It depends on Mg(2+) as a cofactor. Mn(2+) serves as cofactor.

The catalysed reaction is 2-C-methyl-D-erythritol 4-phosphate + NADP(+) = 1-deoxy-D-xylulose 5-phosphate + NADPH + H(+). The protein operates within isoprenoid biosynthesis; isopentenyl diphosphate biosynthesis via DXP pathway; isopentenyl diphosphate from 1-deoxy-D-xylulose 5-phosphate: step 1/6. Its function is as follows. Catalyzes the NADPH-dependent rearrangement and reduction of 1-deoxy-D-xylulose-5-phosphate (DXP) to 2-C-methyl-D-erythritol 4-phosphate (MEP). This is 1-deoxy-D-xylulose 5-phosphate reductoisomerase from Paracoccus denitrificans (strain Pd 1222).